The chain runs to 437 residues: 23S rRNA (uracil(1939)-C(5))-methyltransferase RlmD (437 aa).

A TRAM domain is found at 10 to 68 (SAPRNTTFVAEILDLDYQGRGVAKVQGKTWFIENALPQEKVEVRIVDEKRHYGHGISCK). Cys81, Cys87, Cys90, and Cys167 together coordinate [4Fe-4S] cluster. Residues Gln270, Phe299, Asn304, Glu320, Asn347, and Asp368 each contribute to the S-adenosyl-L-methionine site. The active-site Nucleophile is the Cys394.

It belongs to the class I-like SAM-binding methyltransferase superfamily. RNA M5U methyltransferase family. RlmD subfamily.

It catalyses the reaction uridine(1939) in 23S rRNA + S-adenosyl-L-methionine = 5-methyluridine(1939) in 23S rRNA + S-adenosyl-L-homocysteine + H(+). Functionally, catalyzes the formation of 5-methyl-uridine at position 1939 (m5U1939) in 23S rRNA. The protein is 23S rRNA (uracil(1939)-C(5))-methyltransferase RlmD of Pasteurella multocida (strain Pm70).